Reading from the N-terminus, the 158-residue chain is MFRIGQGFDVHEFAEGRPLIIGGITIPYEKGLLGHSDADVLLHTIADACLGAIAAGDIGKHFPDTDPAFKDADSAVLLQKVWEFVREQGYELGNLDCTIIAQKPKMAPHIESMRKRISELLETSIDNINVKATTTEKLGFTGREEGIASQAVVLLQKK.

A divalent metal cation is bound by residues Asp9 and His11. 4-CDP-2-C-methyl-D-erythritol 2-phosphate-binding positions include 9-11 and 35-36; these read DVH and HS. His43 contacts a divalent metal cation. 4-CDP-2-C-methyl-D-erythritol 2-phosphate-binding positions include 57 to 59, 62 to 66, 101 to 107, 133 to 136, Phe140, and Arg143; these read DIG, FPDTD, AQKPKMA, and TTTE.

It belongs to the IspF family. In terms of assembly, homotrimer. Requires a divalent metal cation as cofactor.

It catalyses the reaction 4-CDP-2-C-methyl-D-erythritol 2-phosphate = 2-C-methyl-D-erythritol 2,4-cyclic diphosphate + CMP. The protein operates within isoprenoid biosynthesis; isopentenyl diphosphate biosynthesis via DXP pathway; isopentenyl diphosphate from 1-deoxy-D-xylulose 5-phosphate: step 4/6. Involved in the biosynthesis of isopentenyl diphosphate (IPP) and dimethylallyl diphosphate (DMAPP), two major building blocks of isoprenoid compounds. Catalyzes the conversion of 4-diphosphocytidyl-2-C-methyl-D-erythritol 2-phosphate (CDP-ME2P) to 2-C-methyl-D-erythritol 2,4-cyclodiphosphate (ME-CPP) with a corresponding release of cytidine 5-monophosphate (CMP). The polypeptide is 2-C-methyl-D-erythritol 2,4-cyclodiphosphate synthase (Bacillus cytotoxicus (strain DSM 22905 / CIP 110041 / 391-98 / NVH 391-98)).